Reading from the N-terminus, the 230-residue chain is Phosphoglycolate phosphatase (230 aa).

The active-site Nucleophile is Asp9. Residues Asp9, Asp11, and Asp175 each coordinate Mg(2+).

It belongs to the HAD-like hydrolase superfamily. CbbY/CbbZ/Gph/YieH family. Requires Mg(2+) as cofactor.

It carries out the reaction 2-phosphoglycolate + H2O = glycolate + phosphate. Its pathway is organic acid metabolism; glycolate biosynthesis; glycolate from 2-phosphoglycolate: step 1/1. Specifically catalyzes the dephosphorylation of 2-phosphoglycolate. Is involved in the dissimilation of the intracellular 2-phosphoglycolate formed during the DNA repair of 3'-phosphoglycolate ends, a major class of DNA lesions induced by oxidative stress. The chain is Phosphoglycolate phosphatase from Psychrobacter arcticus (strain DSM 17307 / VKM B-2377 / 273-4).